Here is a 233-residue protein sequence, read N- to C-terminus: DNA repair protein RecO (233 aa).

It belongs to the RecO family.

Functionally, involved in DNA repair and RecF pathway recombination. This is DNA repair protein RecO from Psychromonas ingrahamii (strain DSM 17664 / CCUG 51855 / 37).